We begin with the raw amino-acid sequence, 348 residues long: Dihydroorotase (348 aa).

The Zn(2+) site is built by histidine 13 and histidine 15. Substrate is bound by residues 15–17 (HLR) and asparagine 41. Zn(2+) is bound by residues lysine 99, histidine 136, and histidine 174. An N6-carboxylysine modification is found at lysine 99. A substrate-binding site is contributed by histidine 136. Position 219 (leucine 219) interacts with substrate. Aspartate 247 lines the Zn(2+) pocket. Residue aspartate 247 is part of the active site. Substrate-binding residues include histidine 251 and alanine 263.

Belongs to the metallo-dependent hydrolases superfamily. DHOase family. Class II DHOase subfamily. In terms of assembly, homodimer. It depends on Zn(2+) as a cofactor.

It catalyses the reaction (S)-dihydroorotate + H2O = N-carbamoyl-L-aspartate + H(+). The protein operates within pyrimidine metabolism; UMP biosynthesis via de novo pathway; (S)-dihydroorotate from bicarbonate: step 3/3. Functionally, catalyzes the reversible cyclization of carbamoyl aspartate to dihydroorotate. The chain is Dihydroorotase from Rhizobium etli (strain ATCC 51251 / DSM 11541 / JCM 21823 / NBRC 15573 / CFN 42).